A 546-amino-acid chain; its full sequence is Chaperonin GroEL (546 aa).

ATP contacts are provided by residues 30–33, 87–91, glycine 414, 477–479, and aspartate 493; these read TLGP, DGTTT, and NAL.

Belongs to the chaperonin (HSP60) family. In terms of assembly, forms a cylinder of 14 subunits composed of two heptameric rings stacked back-to-back. Interacts with the co-chaperonin GroES.

It localises to the cytoplasm. It carries out the reaction ATP + H2O + a folded polypeptide = ADP + phosphate + an unfolded polypeptide.. In terms of biological role, together with its co-chaperonin GroES, plays an essential role in assisting protein folding. The GroEL-GroES system forms a nano-cage that allows encapsulation of the non-native substrate proteins and provides a physical environment optimized to promote and accelerate protein folding. In Syntrophomonas wolfei subsp. wolfei (strain DSM 2245B / Goettingen), this protein is Chaperonin GroEL.